The chain runs to 148 residues: D-aminoacyl-tRNA deacylase (148 aa).

A Gly-cisPro motif, important for rejection of L-amino acids motif is present at residues 137 to 138 (GP).

Belongs to the DTD family. In terms of assembly, homodimer.

Its subcellular location is the cytoplasm. It catalyses the reaction glycyl-tRNA(Ala) + H2O = tRNA(Ala) + glycine + H(+). It carries out the reaction a D-aminoacyl-tRNA + H2O = a tRNA + a D-alpha-amino acid + H(+). Functionally, an aminoacyl-tRNA editing enzyme that deacylates mischarged D-aminoacyl-tRNAs. Also deacylates mischarged glycyl-tRNA(Ala), protecting cells against glycine mischarging by AlaRS. Acts via tRNA-based rather than protein-based catalysis; rejects L-amino acids rather than detecting D-amino acids in the active site. By recycling D-aminoacyl-tRNA to D-amino acids and free tRNA molecules, this enzyme counteracts the toxicity associated with the formation of D-aminoacyl-tRNA entities in vivo and helps enforce protein L-homochirality. The chain is D-aminoacyl-tRNA deacylase from Latilactobacillus sakei subsp. sakei (strain 23K) (Lactobacillus sakei subsp. sakei).